The chain runs to 189 residues: Elongation factor P (189 aa).

At Lys34 the chain carries N6-(3,6-diaminohexanoyl)-5-hydroxylysine.

This sequence belongs to the elongation factor P family. May be beta-lysylated on the epsilon-amino group of Lys-34 by the combined action of EpmA and EpmB, and then hydroxylated on the C5 position of the same residue by EpmC (if this protein is present). Lysylation is critical for the stimulatory effect of EF-P on peptide-bond formation. The lysylation moiety may extend toward the peptidyltransferase center and stabilize the terminal 3-CCA end of the tRNA. Hydroxylation of the C5 position on Lys-34 may allow additional potential stabilizing hydrogen-bond interactions with the P-tRNA.

The protein resides in the cytoplasm. It functions in the pathway protein biosynthesis; polypeptide chain elongation. Functionally, involved in peptide bond synthesis. Alleviates ribosome stalling that occurs when 3 or more consecutive Pro residues or the sequence PPG is present in a protein, possibly by augmenting the peptidyl transferase activity of the ribosome. Modification of Lys-34 is required for alleviation. The sequence is that of Elongation factor P from Acinetobacter baumannii (strain AB307-0294).